Reading from the N-terminus, the 113-residue chain is Putative pterin-4-alpha-carbinolamine dehydratase (113 aa).

Belongs to the pterin-4-alpha-carbinolamine dehydratase family.

It catalyses the reaction (4aS,6R)-4a-hydroxy-L-erythro-5,6,7,8-tetrahydrobiopterin = (6R)-L-erythro-6,7-dihydrobiopterin + H2O. This Nitrosospira multiformis (strain ATCC 25196 / NCIMB 11849 / C 71) protein is Putative pterin-4-alpha-carbinolamine dehydratase.